The following is a 384-amino-acid chain: 8-amino-7-oxononanoate synthase (384 aa).

Arginine 21 serves as a coordination point for substrate. 108-109 (GF) serves as a coordination point for pyridoxal 5'-phosphate. Histidine 133 contacts substrate. Pyridoxal 5'-phosphate contacts are provided by serine 179, histidine 207, and threonine 233. N6-(pyridoxal phosphate)lysine is present on lysine 236. Position 352 (threonine 352) interacts with substrate.

Belongs to the class-II pyridoxal-phosphate-dependent aminotransferase family. BioF subfamily. In terms of assembly, homodimer. The cofactor is pyridoxal 5'-phosphate.

It carries out the reaction 6-carboxyhexanoyl-[ACP] + L-alanine + H(+) = (8S)-8-amino-7-oxononanoate + holo-[ACP] + CO2. The protein operates within cofactor biosynthesis; biotin biosynthesis. Catalyzes the decarboxylative condensation of pimeloyl-[acyl-carrier protein] and L-alanine to produce 8-amino-7-oxononanoate (AON), [acyl-carrier protein], and carbon dioxide. In Escherichia fergusonii (strain ATCC 35469 / DSM 13698 / CCUG 18766 / IAM 14443 / JCM 21226 / LMG 7866 / NBRC 102419 / NCTC 12128 / CDC 0568-73), this protein is 8-amino-7-oxononanoate synthase.